Here is a 430-residue protein sequence, read N- to C-terminus: Type II methyltransferase M.Sau96I (430 aa).

The HTH cro/C1-type domain occupies 9–63; it reads IEKMKNQNIKTQTELAEKIDISKSQLSFMFSDEYEPLKKNVIKLADVLKVSPNDI. Residues 99–429 form the SAM-dependent MTase C5-type domain; the sequence is YNVFETFAGA…KSLVHYLNQF (331 aa). The active site involves Cys-174.

Belongs to the class I-like SAM-binding methyltransferase superfamily. C5-methyltransferase family.

The catalysed reaction is a 2'-deoxycytidine in DNA + S-adenosyl-L-methionine = a 5-methyl-2'-deoxycytidine in DNA + S-adenosyl-L-homocysteine + H(+). Functionally, a methylase that recognizes the double-stranded sequence 5'-GGNCC-3', methylates C-4 on both strands, and protects the DNA from cleavage by the Sau96I endonuclease. This chain is Type II methyltransferase M.Sau96I, found in Staphylococcus aureus.